The following is a 472-amino-acid chain: Acyltransferase PapA3 (472 aa).

It belongs to the PapA acyltransferase family.

It catalyses the reaction a long-chain fatty acyl-CoA + alpha,alpha-trehalose = a 2-O-(long-chain fatty acyl)-alpha,alpha-trehalose + CoA. The catalysed reaction is a mycolipenoyl-CoA + a 2-O-(long-chain fatty acyl)-alpha,alpha-trehalose = a 2-O-(long-chain fatty acyl)-3-O-mycolipenoyl-trehalose + CoA. The enzyme catalyses alpha,alpha-trehalose + hexadecanoyl-CoA = 2-O-hexadecanoyl-alpha,alpha-trehalose + CoA. It carries out the reaction 2-O-hexadecanoyl-alpha,alpha-trehalose + hexadecanoyl-CoA = 2-O,3-O-dihexadecanoyl-alpha,alpha-trehalose + CoA. In terms of biological role, involved in the biosynthesis of polyacyltrehalose (PAT), a pentaacylated, trehalose-based glycolipid that could have a role in anchoring the bacterial capsule. Catalyzes the sequential transfer of two palmitoyl groups onto a single glucose residue of trehalose generating the diacylated product 2,3-diacyltrehalose (trehalose dipalmitate). In Mycobacterium tuberculosis (strain CDC 1551 / Oshkosh), this protein is Acyltransferase PapA3 (papA3).